The sequence spans 462 residues: Cysteine--tRNA ligase (462 aa).

C28 serves as a coordination point for Zn(2+). The short motif at 30–40 (VTAYDLCHIGH) is the 'HIGH' region element. Zn(2+)-binding residues include C209, H234, and E238. The 'KMSKS' region signature appears at 266-270 (KMSKS). K269 contacts ATP.

The protein belongs to the class-I aminoacyl-tRNA synthetase family. In terms of assembly, monomer. The cofactor is Zn(2+).

The protein resides in the cytoplasm. It carries out the reaction tRNA(Cys) + L-cysteine + ATP = L-cysteinyl-tRNA(Cys) + AMP + diphosphate. In Baumannia cicadellinicola subsp. Homalodisca coagulata, this protein is Cysteine--tRNA ligase.